The chain runs to 530 residues: Glucose-6-phosphate isomerase (530 aa).

Catalysis depends on glutamate 335, which acts as the Proton donor. Residues histidine 366 and lysine 495 contribute to the active site.

Belongs to the GPI family.

It is found in the cytoplasm. It carries out the reaction alpha-D-glucose 6-phosphate = beta-D-fructose 6-phosphate. Its pathway is carbohydrate biosynthesis; gluconeogenesis. It functions in the pathway carbohydrate degradation; glycolysis; D-glyceraldehyde 3-phosphate and glycerone phosphate from D-glucose: step 2/4. Functionally, catalyzes the reversible isomerization of glucose-6-phosphate to fructose-6-phosphate. The polypeptide is Glucose-6-phosphate isomerase (Roseobacter denitrificans (strain ATCC 33942 / OCh 114) (Erythrobacter sp. (strain OCh 114))).